The sequence spans 302 residues: Chloramphenicol resistance protein (302 aa).

The protein resides in the cell membrane. In terms of biological role, this protein is thought to be a membrane-associated barrier of drug uptake. This chain is Chloramphenicol resistance protein (cml), found in Escherichia coli.